A 378-amino-acid chain; its full sequence is 3-dehydroquinate synthase (378 aa).

NAD(+)-binding positions include 115–119 (GVVGD), 139–140 (TS), Lys152, and Lys161. Glu194, His256, and His275 together coordinate Zn(2+).

It belongs to the sugar phosphate cyclases superfamily. Dehydroquinate synthase family. Requires Co(2+) as cofactor. Zn(2+) serves as cofactor. It depends on NAD(+) as a cofactor.

Its subcellular location is the cytoplasm. The enzyme catalyses 7-phospho-2-dehydro-3-deoxy-D-arabino-heptonate = 3-dehydroquinate + phosphate. Its pathway is metabolic intermediate biosynthesis; chorismate biosynthesis; chorismate from D-erythrose 4-phosphate and phosphoenolpyruvate: step 2/7. Its function is as follows. Catalyzes the conversion of 3-deoxy-D-arabino-heptulosonate 7-phosphate (DAHP) to dehydroquinate (DHQ). The polypeptide is 3-dehydroquinate synthase (Brucella canis (strain ATCC 23365 / NCTC 10854 / RM-666)).